The chain runs to 256 residues: MALAKRIIPCLDVDNGRVVKGVKFENIRDAGDPVEIARRYDEQGADEITFLDITASVDGRDTTLHTVERMASQVFIPLTVGGGVRTVQDIRNLLNAGADKVSINTAAVFNPEFVGEAAQHFGSQCIVVAIDAKKVSGPGETPRWEIFTHGGRKPTGLDAVEWAKKMEGLGAGEILLTSMDQDGMKNGFDLGVTRAISDALGIPVIASGGVGNLQHLADGILEGHASAVLAASIFHFGEYTVQEAKAYMSKRGIVMR.

Catalysis depends on residues Asp-12 and Asp-131.

It belongs to the HisA/HisF family. In terms of assembly, heterodimer of HisH and HisF.

The protein localises to the cytoplasm. It catalyses the reaction 5-[(5-phospho-1-deoxy-D-ribulos-1-ylimino)methylamino]-1-(5-phospho-beta-D-ribosyl)imidazole-4-carboxamide + L-glutamine = D-erythro-1-(imidazol-4-yl)glycerol 3-phosphate + 5-amino-1-(5-phospho-beta-D-ribosyl)imidazole-4-carboxamide + L-glutamate + H(+). It functions in the pathway amino-acid biosynthesis; L-histidine biosynthesis; L-histidine from 5-phospho-alpha-D-ribose 1-diphosphate: step 5/9. Its function is as follows. IGPS catalyzes the conversion of PRFAR and glutamine to IGP, AICAR and glutamate. The HisF subunit catalyzes the cyclization activity that produces IGP and AICAR from PRFAR using the ammonia provided by the HisH subunit. This is Imidazole glycerol phosphate synthase subunit HisF from Pseudomonas fluorescens (strain Pf0-1).